A 249-amino-acid polypeptide reads, in one-letter code: Proteasome activator complex subunit 1 (249 aa).

The tract at residues 60-102 (PLDIPVPDPVKEKEKEERKKQQEKEDKDEKKKGEDEDKGPPCG) is disordered. Positions 68–98 (PVKEKEKEERKKQQEKEDKDEKKKGEDEDKG) are enriched in basic and acidic residues.

The protein belongs to the PA28 family. As to quaternary structure, heterodimer of PSME1 and PSME2, which forms a hexameric ring. PSME1 can form homoheptamers.

Functionally, implicated in immunoproteasome assembly and required for efficient antigen processing. The PA28 activator complex enhances the generation of class I binding peptides by altering the cleavage pattern of the proteasome. This Sus scrofa (Pig) protein is Proteasome activator complex subunit 1 (PSME1).